A 476-amino-acid polypeptide reads, in one-letter code: Ribulose bisphosphate carboxylase large chain (476 aa).

Substrate-binding residues include N124 and T174. Catalysis depends on K176, which acts as the Proton acceptor. K178 serves as a coordination point for substrate. K202, D204, and E205 together coordinate Mg(2+). K202 bears the N6-carboxylysine mark. H295 (proton acceptor) is an active-site residue. Positions 296, 328, and 380 each coordinate substrate.

It belongs to the RuBisCO large chain family. Type I subfamily. In terms of assembly, heterohexadecamer of 8 large chains and 8 small chains; disulfide-linked. The disulfide link is formed within the large subunit homodimers. Requires Mg(2+) as cofactor. In terms of processing, the disulfide bond which can form in the large chain dimeric partners within the hexadecamer appears to be associated with oxidative stress and protein turnover.

The protein localises to the carboxysome. It catalyses the reaction 2 (2R)-3-phosphoglycerate + 2 H(+) = D-ribulose 1,5-bisphosphate + CO2 + H2O. The catalysed reaction is D-ribulose 1,5-bisphosphate + O2 = 2-phosphoglycolate + (2R)-3-phosphoglycerate + 2 H(+). Its function is as follows. RuBisCO catalyzes two reactions: the carboxylation of D-ribulose 1,5-bisphosphate, the primary event in carbon dioxide fixation, as well as the oxidative fragmentation of the pentose substrate in the photorespiration process. Both reactions occur simultaneously and in competition at the same active site. The chain is Ribulose bisphosphate carboxylase large chain from Acaryochloris marina (strain MBIC 11017).